A 199-amino-acid chain; its full sequence is NAD(P)H dehydrogenase (quinone) (199 aa).

Positions 4-190 (VLVLYYSTYG…AGARHQGELV (187 aa)) constitute a Flavodoxin-like domain. FMN contacts are provided by residues 10 to 15 (STYGHL) and 78 to 80 (TRF). Residue Y12 participates in NAD(+) binding. W98 lines the substrate pocket. FMN is bound by residues 113–119 (STATQHG) and H134.

Belongs to the WrbA family. Requires FMN as cofactor.

The catalysed reaction is a quinone + NADH + H(+) = a quinol + NAD(+). The enzyme catalyses a quinone + NADPH + H(+) = a quinol + NADP(+). This chain is NAD(P)H dehydrogenase (quinone), found in Azorhizobium caulinodans (strain ATCC 43989 / DSM 5975 / JCM 20966 / LMG 6465 / NBRC 14845 / NCIMB 13405 / ORS 571).